Consider the following 145-residue polypeptide: Antiholin-like protein LrgA (145 aa).

4 consecutive transmembrane segments (helical) span residues 10–30 (PAHFFHQVIVIALVLFVSKII), 33–53 (FMPIPMPASVIGLVLLFVLLC), 72–92 (NIGLLFVPAGISVVNSLGVIS), and 96–116 (FLIIGLIIVSTILLLICTGYV).

Belongs to the CidA/LrgA family. LrgA subfamily.

The protein localises to the cell membrane. Functionally, inhibits the expression or activity of extracellular murein hydrolases by interacting, possibly with LrgB, with the holin-like proteins CidA and/or CidB. The LrgAB and CidAB proteins may affect the proton motive force of the membrane. May be involved in programmed cell death (PCD), possibly triggering PCD in response to antibiotics and environmental stresses. This Staphylococcus aureus (strain JH1) protein is Antiholin-like protein LrgA.